The following is a 402-amino-acid chain: AA9 family lytic polysaccharide monooxygenase E (402 aa).

The N-terminal stretch at 1-16 (MSRLVSFASLLAAVNA) is a signal peptide. Cu(2+) is bound at residue His-17. Cystine bridges form between Cys-72/Cys-194 and Cys-113/Cys-117. A glycan (N-linked (GlcNAc...) asparagine) is linked at Asn-75. His-102 lines the Cu(2+) pocket. A glycan (N-linked (GlcNAc...) asparagine) is linked at Asn-154. The O2 site is built by His-180 and Gln-189. Tyr-191 serves as a coordination point for Cu(2+). The region spanning 364–400 (GSNPLYAQCGGLNFKGASGCVAGATCKKMNPYYSQCV) is the CBM1 domain.

This sequence belongs to the polysaccharide monooxygenase AA9 family. Cu(2+) is required as a cofactor.

Its subcellular location is the secreted. The enzyme catalyses [(1-&gt;4)-beta-D-glucosyl]n+m + reduced acceptor + O2 = 4-dehydro-beta-D-glucosyl-[(1-&gt;4)-beta-D-glucosyl]n-1 + [(1-&gt;4)-beta-D-glucosyl]m + acceptor + H2O.. Functionally, lytic polysaccharide monooxygenase (LPMO) that depolymerizes crystalline and amorphous polysaccharides via the oxidation of scissile alpha- or beta-(1-4)-glycosidic bonds, yielding C1 or C4 oxidation products. Catalysis by LPMOs requires the reduction of the active-site copper from Cu(II) to Cu(I) by a reducing agent and H(2)O(2) or O(2) as a cosubstrate. The sequence is that of AA9 family lytic polysaccharide monooxygenase E from Emericella nidulans (strain FGSC A4 / ATCC 38163 / CBS 112.46 / NRRL 194 / M139) (Aspergillus nidulans).